Here is a 439-residue protein sequence, read N- to C-terminus: UPF0489 protein C5orf22 homolog (439 aa).

Residues 163–219 (TTKLENGQSGAKIPKAAQTQDDMQSKADTPCTSSSQPPDGSAASGNISETAKKKADD) are disordered. The segment covering 179–211 (AQTQDDMQSKADTPCTSSSQPPDGSAASGNISE) has biased composition (polar residues).

It belongs to the UPF0489 family.

The chain is UPF0489 protein C5orf22 homolog from Danio rerio (Zebrafish).